We begin with the raw amino-acid sequence, 755 residues long: MKFNQFSYIPVSPETAYQELRSLGFEVSLDASAKANFESFVRKYFLFFEDTDLALKNWIADPETDLLSFFQSDRPLTAEVFGLVALQLLGFVPNVDFTDSVAFLEKMAFPIAFDGSLNNLHQLLATRTQSGNTLIDQLVAQDLIPISNDYVFFNGKSLATFDTNQLHREVVYVETPVDTDKDGLLDLVKVTILRPNVDFPVPAMMTASPYQQGTNEPSSDKLTHKMEGDLLVKPAGKISLSRPEIKAPEADLTPINPVTKAEERFAHTDTYTLNDYMLARGVASIYVSGVGTFNSEGFMTSGDYQQVLAYKAVIDWLNGRARAFTSRSRQHTITADWASGKVTTTGLSYLGTMSNALATTGVDGLEMVIAEAGISSWYDYYRENGLLVSPGGYPGEDLDTLTEFTYSRALLAGEYLRHQKDYEAYLNELSTAIDRKHGDYNQFWHDRNYVQFADRVKATVVFTHGSQDWNVKPINVYQMFRALPKSLEKHLFFHNGAHVYMNAWQSIDFRESMNALICQKLLDLDNGYTLPTVIWQNNQSEQTWEVLDNFGHDNGKHIQLGKAEASIANHYEEEIFAKYGKAYQSFKDDLFMDKANAITLDFELDQDIQINGRVHLELRVKSSTNRGLISAQVLEMGDKKYLAPIPELKRMNVDNGRLFKEEALRELPFKQAKYRVITKGHLNLQNRKDLLSIENVTPNEWMTIGLDLQPTIYKLNKGDKLRLVLYTTDFEHTIRDNSDYEVTVDLSQSKMTLPY.

Residues serine 348, aspartate 468, and histidine 498 each act as charge relay system in the active site.

The protein belongs to the peptidase S15 family. In terms of assembly, homodimer.

It is found in the cytoplasm. It carries out the reaction Hydrolyzes Xaa-Pro-|- bonds to release unblocked, N-terminal dipeptides from substrates including Ala-Pro-|-p-nitroanilide and (sequentially) Tyr-Pro-|-Phe-Pro-|-Gly-Pro-|-Ile.. Functionally, removes N-terminal dipeptides sequentially from polypeptides having unsubstituted N-termini provided that the penultimate residue is proline. In Streptococcus thermophilus (strain ATCC BAA-491 / LMD-9), this protein is Xaa-Pro dipeptidyl-peptidase.